The chain runs to 298 residues: NADH-cytochrome b5 reductase 1 (298 aa).

A helical transmembrane segment spans residues 14–34; the sequence is VILAGAYLIDPSALPFVAAGV. The region spanning 56–159 is the FAD-binding FR-type domain; it reads KEYRKFKLVD…RGPKGQFSYT (104 aa). FAD-binding positions include 139-154 and 165-197; these read SELS…GPKG and AIGM…QVNF.

It belongs to the flavoprotein pyridine nucleotide cytochrome reductase family. In terms of assembly, monomer. Component of the 2-(3-amino-3-carboxypropyl)histidine synthase complex composed of DPH1, DPH2, DPH3 and a NADH-dependent reductase, predominantly CBR1. Requires FAD as cofactor.

Its subcellular location is the mitochondrion outer membrane. The enzyme catalyses 2 Fe(III)-[cytochrome b5] + NADH = 2 Fe(II)-[cytochrome b5] + NAD(+) + H(+). It catalyses the reaction 2 Fe(3+)-[Dph3] + NADH = 2 Fe(2+)-[Dph3] + NAD(+) + H(+). It functions in the pathway protein modification; peptidyl-diphthamide biosynthesis. NADH-dependent reductase for DPH3 and cytochrome b5. Required for the first step of diphthamide biosynthesis, a post-translational modification of histidine which occurs in elongation factor 2. DPH1 and DPH2 transfer a 3-amino-3-carboxypropyl (ACP) group from S-adenosyl-L-methionine (SAM) to a histidine residue, the reaction is assisted by a reduction system comprising DPH3 and a NADH-dependent reductase, predominantly CBR1. By reducing DPH3, also involved in the formation of the tRNA wobble base modification mcm5s 2U (5-methoxycarbonylmethyl-2-thiouridine), mediated by the elongator complex. The cytochrome b5/NADH cytochrome b5 reductase electron transfer system supports the catalytic activity of several sterol biosynthetic enzymes. In Mortierella alpina (Oleaginous fungus), this protein is NADH-cytochrome b5 reductase 1 (CBR1).